We begin with the raw amino-acid sequence, 385 residues long: 8-amino-7-oxononanoate synthase (385 aa).

Arginine 21 is a substrate binding site. 108 to 109 (GF) contributes to the pyridoxal 5'-phosphate binding site. A substrate-binding site is contributed by histidine 133. Pyridoxal 5'-phosphate is bound by residues serine 179, histidine 207, and threonine 233. At lysine 236 the chain carries N6-(pyridoxal phosphate)lysine. Threonine 352 is a binding site for substrate.

This sequence belongs to the class-II pyridoxal-phosphate-dependent aminotransferase family. BioF subfamily. As to quaternary structure, homodimer. Requires pyridoxal 5'-phosphate as cofactor.

The enzyme catalyses 6-carboxyhexanoyl-[ACP] + L-alanine + H(+) = (8S)-8-amino-7-oxononanoate + holo-[ACP] + CO2. It functions in the pathway cofactor biosynthesis; biotin biosynthesis. Its function is as follows. Catalyzes the decarboxylative condensation of pimeloyl-[acyl-carrier protein] and L-alanine to produce 8-amino-7-oxononanoate (AON), [acyl-carrier protein], and carbon dioxide. This is 8-amino-7-oxononanoate synthase from Salmonella agona (strain SL483).